We begin with the raw amino-acid sequence, 527 residues long: Catalase (527 aa).

Basic and acidic residues predominate over residues 1–22 (MADNRDPASDQMKHWKEQRAAQ). Residues 1–32 (MADNRDPASDQMKHWKEQRAAQKPDILTTGSG) are disordered. Residue A2 is modified to N-acetylalanine. A Phosphoserine modification is found at S9. K13 is subject to N6-succinyllysine. Active-site residues include H75 and N148. The NADP(+) site is built by H194, S201, R203, and N213. Position 221 is an N6-succinyllysine (K221). An N6-acetyllysine modification is found at K233. NADP(+) contacts are provided by K237, W303, and H305. Residue Y358 participates in heme binding. S417 and S434 each carry phosphoserine. K480 is modified (N6-acetyllysine; alternate). K480 is subject to N6-succinyllysine; alternate. K499 bears the N6-acetyllysine mark. T511 carries the phosphothreonine modification. S517 bears the Phosphoserine mark. Residues 524-527 (KANL) carry the Microbody targeting signal; atypical motif.

This sequence belongs to the catalase family. Homotetramer. Interacts (via microbody targeting signal) with PEX5, monomeric form interacts with PEX5, leading to its translocation into peroxisomes. Requires heme as cofactor. It depends on NADP(+) as a cofactor.

It localises to the peroxisome matrix. The catalysed reaction is 2 H2O2 = O2 + 2 H2O. Catalyzes the degradation of hydrogen peroxide (H(2)O(2)) generated by peroxisomal oxidases to water and oxygen, thereby protecting cells from the toxic effects of hydrogen peroxide. Promotes growth of cells including T-cells, B-cells, myeloid leukemia cells, melanoma cells, mastocytoma cells and normal and transformed fibroblast cells. The protein is Catalase (CAT) of Sus scrofa (Pig).